The chain runs to 662 residues: Polyadenylate-binding protein 4 (662 aa).

Residues 1 to 23 (MAQVQAPSSHSPPPPAVVNDGAA) form a disordered region. RRM domains lie at 46–124 (CSLY…YSSR), 134–211 (GNLF…PFLR), 225–302 (TNVY…KAQK), and 328–405 (LNLY…LAQR). Composition is skewed to low complexity over residues 480 to 489 (PMMQPGQQGP) and 506 to 518 (QQPM…QMMP). 2 disordered regions span residues 480–518 (PMMQ…QMMP) and 634–662 (NQPS…NDHL). The PABC domain maps to 558–635 (SAGQLATSLA…ALDVLRNVNQ (78 aa)). The span at 634–649 (NQPSSQGSEGNKSGSP) shows a compositional bias: polar residues.

This sequence belongs to the polyadenylate-binding protein type-1 family. In terms of assembly, interacts with ERD15/CID1. Interacts with Turnip mosaic virus (TuMV) VPg-Pro.

The protein resides in the cytoplasm. The protein localises to the nucleus. Functionally, binds the poly(A) tail of mRNA. Appears to be an important mediator of the multiple roles of the poly(A) tail in mRNA biogenesis, stability and translation. During infection with potyvirus TuMV, acts as a potential integral component of the viral replicase complex that could play an important role in the regulation of potyviral RNA-dependent RNA polymerase (RdRp). The chain is Polyadenylate-binding protein 4 (PAB4) from Arabidopsis thaliana (Mouse-ear cress).